A 339-amino-acid chain; its full sequence is Ketol-acid reductoisomerase (NADP(+)) (339 aa).

Positions 1–182 (MRVYYDRDAD…GGGRSGIIET (182 aa)) constitute a KARI N-terminal Rossmann domain. NADP(+) is bound by residues 24–27 (YGSQ), R48, S51, T53, and 83–86 (DEHQ). H108 is a catalytic residue. Residue G134 coordinates NADP(+). The 146-residue stretch at 183-328 (NFREECETDL…ARLRGMMPWI (146 aa)) folds into the KARI C-terminal knotted domain. Residues D191, E195, E227, and E231 each contribute to the Mg(2+) site. S252 is a substrate binding site.

The protein belongs to the ketol-acid reductoisomerase family. Requires Mg(2+) as cofactor.

It catalyses the reaction (2R)-2,3-dihydroxy-3-methylbutanoate + NADP(+) = (2S)-2-acetolactate + NADPH + H(+). The catalysed reaction is (2R,3R)-2,3-dihydroxy-3-methylpentanoate + NADP(+) = (S)-2-ethyl-2-hydroxy-3-oxobutanoate + NADPH + H(+). The protein operates within amino-acid biosynthesis; L-isoleucine biosynthesis; L-isoleucine from 2-oxobutanoate: step 2/4. Its pathway is amino-acid biosynthesis; L-valine biosynthesis; L-valine from pyruvate: step 2/4. Its function is as follows. Involved in the biosynthesis of branched-chain amino acids (BCAA). Catalyzes an alkyl-migration followed by a ketol-acid reduction of (S)-2-acetolactate (S2AL) to yield (R)-2,3-dihydroxy-isovalerate. In the isomerase reaction, S2AL is rearranged via a Mg-dependent methyl migration to produce 3-hydroxy-3-methyl-2-ketobutyrate (HMKB). In the reductase reaction, this 2-ketoacid undergoes a metal-dependent reduction by NADPH to yield (R)-2,3-dihydroxy-isovalerate. This chain is Ketol-acid reductoisomerase (NADP(+)), found in Caulobacter sp. (strain K31).